A 627-amino-acid chain; its full sequence is UvrABC system protein C (627 aa).

A GIY-YIG domain is found at 26–105 (PSPGVYQFRN…IKELKPRYNV (80 aa)). One can recognise a UVR domain in the interval 219-254 (STMIRSLTSAMQLFARELKFERAAEIKMQLESLKRY).

This sequence belongs to the UvrC family. As to quaternary structure, interacts with UvrB in an incision complex.

Its subcellular location is the cytoplasm. In terms of biological role, the UvrABC repair system catalyzes the recognition and processing of DNA lesions. UvrC both incises the 5' and 3' sides of the lesion. The N-terminal half is responsible for the 3' incision and the C-terminal half is responsible for the 5' incision. The polypeptide is UvrABC system protein C (Pelodictyon phaeoclathratiforme (strain DSM 5477 / BU-1)).